Consider the following 374-residue polypeptide: tRNA-specific 2-thiouridylase MnmA (374 aa).

Residues 12 to 19 and methionine 38 each bind ATP; that span reads GMSGGVDS. The interval 98–100 is interaction with target base in tRNA; it reads NPD. Cysteine 103 serves as the catalytic Nucleophile. Cysteine 103 and cysteine 202 are oxidised to a cystine. Glycine 128 is a binding site for ATP. The interaction with tRNA stretch occupies residues 152 to 154; that stretch reads KDQ. The Cysteine persulfide intermediate role is filled by cysteine 202. Residues 316 to 317 form an interaction with tRNA region; it reads RY.

Belongs to the MnmA/TRMU family.

It is found in the cytoplasm. It carries out the reaction S-sulfanyl-L-cysteinyl-[protein] + uridine(34) in tRNA + AH2 + ATP = 2-thiouridine(34) in tRNA + L-cysteinyl-[protein] + A + AMP + diphosphate + H(+). Its function is as follows. Catalyzes the 2-thiolation of uridine at the wobble position (U34) of tRNA, leading to the formation of s(2)U34. The polypeptide is tRNA-specific 2-thiouridylase MnmA (Vibrio vulnificus (strain CMCP6)).